We begin with the raw amino-acid sequence, 909 residues long: Myb-like protein Q (909 aa).

Disordered regions lie at residues 15–65 (TTNN…QQQQ), 84–149 (QQQN…QQIL), and 216–280 (SAPS…KGPW). Low complexity predominate over residues 17–46 (NNNSNNNNNNNNNNNNNNNNNNNNNINQNH). Over residues 47-56 (QHQHQHHHHQ) the composition is skewed to basic residues. The span at 84–126 (QQQNYGESTTSTSMIPPSITTSLTPLTPTLSSQPQNIQQQQQQ) shows a compositional bias: low complexity. Basic residues predominate over residues 127 to 139 (QHHHQQQHHHHHQ). Polar residues predominate over residues 216 to 226 (SAPSTPLSMSP). 2 consecutive HTH myb-type domains span residues 272–327 (SPGI…SPEV) and 328–378 (RKTN…LKKI). 2 consecutive DNA-binding regions (H-T-H motif) follow at residues 300 to 323 (WSSI…FNHL) and 351 to 374 (WTAI…NSTL). Residues 379–389 (GGDSKSLNKEK) show a composition bias toward basic and acidic residues. Disordered regions lie at residues 379 to 482 (GGDS…NTAI), 497 to 531 (QTTP…QTQQ), 616 to 642 (SMEQ…QQQQ), 672 to 748 (YQQQ…HPIE), and 826 to 855 (LNTT…IPTP). The span at 390–401 (DDDDDDDEDAED) shows a compositional bias: acidic residues. Composition is skewed to low complexity over residues 415-431 (SSSS…TNSS) and 444-482 (STTT…NTAI). Polar residues predominate over residues 497-508 (QTTPNSSPSLSS). 4 stretches are compositionally biased toward low complexity: residues 622–642 (YQQQ…QQQQ), 672–726 (YQQQ…QQQQ), 733–744 (NSNNTDTTFSNS), and 826–851 (LNTT…NNNN).

The protein localises to the nucleus. In Dictyostelium discoideum (Social amoeba), this protein is Myb-like protein Q (mybQ).